The chain runs to 237 residues: Photosystem I-associated linker protein CpcL (237 aa).

Residues 11-191 form the PBS-linker domain; sequence TTQNQRVQSF…DYRDRAGIVR (181 aa). Residues 208-228 form a helical membrane-spanning segment; the sequence is GVAILGVLLAISAGMTFLFVL.

The protein belongs to the phycobilisome linker protein family. In terms of assembly, part of a specialized phycobilisome (PBS), a structure that is usually composed of two distinct substructures: a core complex and a number of rods radiating from the core. This protein is part of a core-less PBS rod (called CpcL-PBS). In vegetative cells associated substoichiometrically with photosystem I and phycobiliproteins phycocyanin as well as phycoerythrocyanin in the thylakoid membrane, not found in conventional, hemidiscoidal phycobilisomes.

It is found in the cellular thylakoid membrane. Rod linker protein, associated with phycocyanin (PC). Linker polypeptides determine the state of aggregation and the location of the disk-shaped phycobiliprotein units within the phycobilisome (PBS) and modulate their spectroscopic properties in order to mediate a directed and optimal energy transfer. Forms a supercomplex with tetrameric photosystem I (PSI) and PC that allows efficient energy transfer from PC to PSI. This protein seems to be in the middle of the PC hexameric rod and may anchor the PC rods at the periphery of PSI tetramers. May be involved in the cyclic electron transport around PSI that provides ATP needed for N(2) fixation in heterocysts. The protein is Photosystem I-associated linker protein CpcL of Nostoc sp. (strain PCC 7120 / SAG 25.82 / UTEX 2576).